A 408-amino-acid chain; its full sequence is Succinylornithine transaminase (408 aa).

Lys252 is subject to N6-(pyridoxal phosphate)lysine.

It belongs to the class-III pyridoxal-phosphate-dependent aminotransferase family. AstC subfamily. The cofactor is pyridoxal 5'-phosphate.

It catalyses the reaction N(2)-succinyl-L-ornithine + 2-oxoglutarate = N-succinyl-L-glutamate 5-semialdehyde + L-glutamate. It functions in the pathway amino-acid degradation; L-arginine degradation via AST pathway; L-glutamate and succinate from L-arginine: step 3/5. Functionally, catalyzes the transamination of N(2)-succinylornithine and alpha-ketoglutarate into N(2)-succinylglutamate semialdehyde and glutamate. Can also act as an acetylornithine aminotransferase. This is Succinylornithine transaminase from Salmonella typhi.